A 565-amino-acid polypeptide reads, in one-letter code: Phosphatidylinositol 4-kinase gamma 4 (565 aa).

2 Ubiquitin-like domains span residues 32-104 and 109-187; these read IVIF…LVVR and RAIS…RPAK. The PI3K/PI4K catalytic domain maps to 257-542; the sequence is GYLPVMSTEG…AILPGTSEET (286 aa). The G-loop stretch occupies residues 263 to 269; it reads STEGSGG. Residues 264–270 and Lys286 each bind ATP; that span reads TEGSGGV. A disordered region spans residues 291–311; sequence EPMAKNNPRGLPLSTDGEGLK. 369-372 contacts ATP; it reads QLFV. The segment at 402–410 is catalytic loop; the sequence is ANADRHAGN. An activation loop region spans residues 425 to 451; the sequence is PIDHGYCLPEKFEDCTFEWLYWPQARE. Asp427 serves as a coordination point for ATP.

It belongs to the PI3/PI4-kinase family. Type II PI4K subfamily. Interacts with FTIP1 and RPN10. Specifically expressed in the phloem including companion cells.

It localises to the nucleus. It is found in the endoplasmic reticulum. It catalyses the reaction a 1,2-diacyl-sn-glycero-3-phospho-(1D-myo-inositol) + ATP = a 1,2-diacyl-sn-glycero-3-phospho-(1D-myo-inositol 4-phosphate) + ADP + H(+). Functionally, the phosphorylation of phosphatidylinositol (PI) to PI4P is the first committed step in the generation of phosphatidylinositol 4,5-bisphosphate (PIP2), a precursor of the second messenger inositol 1,4,5-trisphosphate (InsP3). Involved in the control of flowering under long day conditions by promoting degradation of FTIP1. Recruits FTIP1 for degradation by the 26S proteasome in leaves, which affects RFT1 transport to the shoot apical meristem (SAM). The polypeptide is Phosphatidylinositol 4-kinase gamma 4 (Oryza sativa subsp. japonica (Rice)).